The sequence spans 212 residues: Thymidylate kinase (212 aa).

11-18 is a binding site for ATP; sequence GPEGAGKT.

Belongs to the thymidylate kinase family.

It carries out the reaction dTMP + ATP = dTDP + ADP. Phosphorylation of dTMP to form dTDP in both de novo and salvage pathways of dTTP synthesis. The chain is Thymidylate kinase from Streptococcus pneumoniae (strain CGSP14).